A 366-amino-acid polypeptide reads, in one-letter code: UDP-N-acetylenolpyruvoylglucosamine reductase (366 aa).

The region spanning 29–203 is the FAD-binding PCMH-type domain; sequence VGPVARTLVT…LEVEFALDAS (175 aa). R177 is a catalytic residue. The Proton donor role is filled by S258. The active site involves E358.

This sequence belongs to the MurB family. FAD serves as cofactor.

It localises to the cytoplasm. The enzyme catalyses UDP-N-acetyl-alpha-D-muramate + NADP(+) = UDP-N-acetyl-3-O-(1-carboxyvinyl)-alpha-D-glucosamine + NADPH + H(+). It functions in the pathway cell wall biogenesis; peptidoglycan biosynthesis. In terms of biological role, cell wall formation. This is UDP-N-acetylenolpyruvoylglucosamine reductase from Mycobacterium marinum (strain ATCC BAA-535 / M).